A 382-amino-acid chain; its full sequence is Mannitol-1-phosphate 5-dehydrogenase (382 aa).

Residue 3 to 14 (ALHFGAGNIGRG) coordinates NAD(+). Position 269 is an N6-acetyllysine (K269).

The protein belongs to the mannitol dehydrogenase family.

It carries out the reaction D-mannitol 1-phosphate + NAD(+) = beta-D-fructose 6-phosphate + NADH + H(+). The sequence is that of Mannitol-1-phosphate 5-dehydrogenase from Shigella boydii serotype 18 (strain CDC 3083-94 / BS512).